The chain runs to 158 residues: MGIEGVLDKGFVTTSLDSLINWGRTGSMWPMTFGLACCAVEMMQTGASRYDLDRFGIVFRPSPRQSDVMIVAGTLCNKMAPALRKVYDQMAEPRWVISMGSCANGGGYYHYSYSVVRGCDRIVPVDIYVPGCPPTAEALLYGIIQLQNKIKRTNTIAR.

4 residues coordinate [4Fe-4S] cluster: cysteine 37, cysteine 38, cysteine 102, and cysteine 132.

It belongs to the complex I 20 kDa subunit family. NDH-1 is composed of 14 different subunits. Subunits NuoB, C, D, E, F, and G constitute the peripheral sector of the complex. The cofactor is [4Fe-4S] cluster.

The protein resides in the cell inner membrane. The enzyme catalyses a quinone + NADH + 5 H(+)(in) = a quinol + NAD(+) + 4 H(+)(out). NDH-1 shuttles electrons from NADH, via FMN and iron-sulfur (Fe-S) centers, to quinones in the respiratory chain. Couples the redox reaction to proton translocation (for every two electrons transferred, four hydrogen ions are translocated across the cytoplasmic membrane), and thus conserves the redox energy in a proton gradient. This Nitrosomonas europaea (strain ATCC 19718 / CIP 103999 / KCTC 2705 / NBRC 14298) protein is NADH-quinone oxidoreductase subunit B.